The chain runs to 289 residues: ATP synthase gamma chain (289 aa).

Belongs to the ATPase gamma chain family. F-type ATPases have 2 components, CF(1) - the catalytic core - and CF(0) - the membrane proton channel. CF(1) has five subunits: alpha(3), beta(3), gamma(1), delta(1), epsilon(1). CF(0) has three main subunits: a, b and c.

It is found in the cell membrane. In terms of biological role, produces ATP from ADP in the presence of a proton gradient across the membrane. The gamma chain is believed to be important in regulating ATPase activity and the flow of protons through the CF(0) complex. This chain is ATP synthase gamma chain, found in Buchnera aphidicola subsp. Melaphis rhois.